Consider the following 41-residue polypeptide: Maticotoxin A (41 aa).

Intrachain disulfides connect Cys3–Cys22 and Cys15–Cys39.

This sequence belongs to the three-finger toxin family. Short-chain subfamily. Expressed by the venom gland.

It is found in the secreted. This Calliophis bivirgatus (Blue Malaysian coral snake) protein is Maticotoxin A.